The primary structure comprises 63 residues: Bowman-Birk type proteinase inhibitor (63 aa).

7 cysteine pairs are disulfide-bonded: Cys-7-Cys-60, Cys-8-Cys-23, Cys-11-Cys-56, Cys-13-Cys-21, Cys-30-Cys-37, Cys-34-Cys-49, and Cys-39-Cys-47.

As to quaternary structure, monomer.

Inhibits trypsin stoichiometrically at the molar ratio of 1:2, with a dissociation constant of 4.2 nM. Does not inhibit chymotrypsin. In Lupinus albus (White lupine), this protein is Bowman-Birk type proteinase inhibitor.